The sequence spans 224 residues: MIPFTSGKCYDRFPSMLFTYRVVIGRSFCQAHRGSLMAENRSKGAKNAIKVVHESSLTSKEQREKSKDDETPAWKIQKMAISKKLKGQRWNPSKRLSREEMEGLRLIKSQFPHLNASELGQQFKVSPEVVKRILSSKWRPTEDELGKLQDRWKQRGERIKQMFDSHQIQEKPLVVPKRIVINTLGSSPSVVATTRPSKNAKSNKRTKNKLHLLQQREHDHEHSE.

A mitochondrion-targeting transit peptide spans 1–42 (MIPFTSGKCYDRFPSMLFTYRVVIGRSFCQAHRGSLMAENRS). Disordered regions lie at residues 53 to 72 (HESS…DETP) and 186 to 224 (SSPS…EHSE). Positions 60–72 (KEQREKSKDDETP) are enriched in basic and acidic residues. Residues 186-200 (SSPSVVATTRPSKNA) show a composition bias toward polar residues. Residues 201 to 210 (KSNKRTKNKL) are compositionally biased toward basic residues. Residues 214–224 (QQREHDHEHSE) show a composition bias toward basic and acidic residues.

The protein belongs to the RRG9 family.

Its subcellular location is the mitochondrion. In terms of biological role, required for respiratory activity and maintenance and expression of the mitochondrial genome. This is Required for respiratory growth protein 9, mitochondrial (RRG9) from Zygosaccharomyces rouxii (strain ATCC 2623 / CBS 732 / NBRC 1130 / NCYC 568 / NRRL Y-229).